The chain runs to 29 residues: Ranatuerin-2SEa (29 aa).

A disulfide bond links cysteine 23 and cysteine 29.

Expressed by the skin glands.

It is found in the secreted. Mast cell degranulating peptide. Causes histamine release from rat peritoneal mast cells in vitro. Has antibacterial activity against the Gram-negative bacterium E.coli K12 and Gram-positive bacterium M.luteus NCT C2665. The protein is Ranatuerin-2SEa of Lithobates sevosus (Dusky gopher frog).